The chain runs to 149 residues: Arginine repressor (149 aa).

It belongs to the ArgR family.

The protein resides in the cytoplasm. Its pathway is amino-acid biosynthesis; L-arginine biosynthesis [regulation]. Its function is as follows. Regulates arginine biosynthesis genes. This is Arginine repressor from Bacillus velezensis (strain DSM 23117 / BGSC 10A6 / LMG 26770 / FZB42) (Bacillus amyloliquefaciens subsp. plantarum).